Here is a 152-residue protein sequence, read N- to C-terminus: Xanthine-guanine phosphoribosyltransferase (152 aa).

5-phospho-alpha-D-ribose 1-diphosphate is bound by residues 37 to 38 (RG), Arg-69, and 88 to 96 (DDLVDTGGT). Arg-69 is a GMP binding site. Mg(2+) is bound at residue Asp-89. The guanine site is built by Asp-92 and Ile-135. Xanthine contacts are provided by Asp-92 and Ile-135. GMP-binding positions include 92–96 (DTGGT) and 134–135 (WI).

This sequence belongs to the purine/pyrimidine phosphoribosyltransferase family. XGPT subfamily. As to quaternary structure, homotetramer. Mg(2+) is required as a cofactor.

The protein localises to the cell inner membrane. It catalyses the reaction GMP + diphosphate = guanine + 5-phospho-alpha-D-ribose 1-diphosphate. The enzyme catalyses XMP + diphosphate = xanthine + 5-phospho-alpha-D-ribose 1-diphosphate. It carries out the reaction IMP + diphosphate = hypoxanthine + 5-phospho-alpha-D-ribose 1-diphosphate. It functions in the pathway purine metabolism; GMP biosynthesis via salvage pathway; GMP from guanine: step 1/1. Its pathway is purine metabolism; XMP biosynthesis via salvage pathway; XMP from xanthine: step 1/1. Functionally, purine salvage pathway enzyme that catalyzes the transfer of the ribosyl-5-phosphate group from 5-phospho-alpha-D-ribose 1-diphosphate (PRPP) to the N9 position of the 6-oxopurines guanine and xanthine to form the corresponding ribonucleotides GMP (guanosine 5'-monophosphate) and XMP (xanthosine 5'-monophosphate), with the release of PPi. To a lesser extent, also acts on hypoxanthine. The polypeptide is Xanthine-guanine phosphoribosyltransferase (Salmonella choleraesuis (strain SC-B67)).